A 292-amino-acid chain; its full sequence is Alpha-soluble NSF attachment protein (292 aa).

The residue at position 2 (serine 2) is an N-acetylserine. Residue lysine 261 forms a Glycyl lysine isopeptide (Lys-Gly) (interchain with G-Cter in ubiquitin) linkage.

The protein belongs to the SNAP family. In terms of assembly, binds to vacuolar cis-SNARE complexes composed of the v-SNAREs NYV1, VTI1 and YKT6, and the t-SNAREs VAM3 and VAM7. Interacts with SEC18.

The protein resides in the membrane. SNARE complex protein that binds to cis-SNARE complexes on membranes and is required for vesicular transport between the endoplasmic reticulum and the Golgi apparatus and for homotypic vacuole fusion. During the priming step of membrane fusion, is released from cis-SNARE complexes by SEC18 to establish a pool of unpaired SNAREs, which are required for interactions in trans during docking and fusion steps. Can displace HOPS from SNARE complexes, which may be a prerequisite for trans-SNARE complex disassembly and subsequent rounds of priming, docking and fusion. This chain is Alpha-soluble NSF attachment protein (SEC17), found in Saccharomyces cerevisiae (strain ATCC 204508 / S288c) (Baker's yeast).